A 411-amino-acid polypeptide reads, in one-letter code: F-box/kelch-repeat protein At3g61590 (411 aa).

Residues F37–F83 enclose the F-box domain. Kelch repeat units follow at residues C81–G135, V137–S178, S196–N246, M251–L299, R302–E350, and F352–F401.

As to quaternary structure, part of a SCF (ASK-cullin-F-box) protein ligase complex. Interacts with SKP1A/ASK1, SKP1B/ASK2, ASK3, ASK9, ASK11, ASK12, ASK13, ASK14, ASK16 and ASK18.

It participates in protein modification; protein ubiquitination. In terms of biological role, component of SCF(ASK-cullin-F-box) E3 ubiquitin ligase complexes, which may mediate the ubiquitination and subsequent proteasomal degradation of target proteins. This is F-box/kelch-repeat protein At3g61590 from Arabidopsis thaliana (Mouse-ear cress).